Consider the following 87-residue polypeptide: Small ribosomal subunit protein bS20 (87 aa).

It belongs to the bacterial ribosomal protein bS20 family.

Its function is as follows. Binds directly to 16S ribosomal RNA. The sequence is that of Small ribosomal subunit protein bS20 from Finegoldia magna (strain ATCC 29328 / DSM 20472 / WAL 2508) (Peptostreptococcus magnus).